Reading from the N-terminus, the 310-residue chain is Putative S-adenosyl-L-methionine-dependent methyltransferase ML2640 (310 aa).

Residues aspartate 132 and 161–162 (DL) contribute to the S-adenosyl-L-methionine site.

The protein belongs to the UPF0677 family.

In terms of biological role, exhibits S-adenosyl-L-methionine-dependent methyltransferase activity. In Mycobacterium leprae (strain TN), this protein is Putative S-adenosyl-L-methionine-dependent methyltransferase ML2640.